The primary structure comprises 1014 residues: Beta-galactosidase (1014 aa).

E460 serves as the catalytic Proton donor. Catalysis depends on E527, which acts as the Nucleophile.

It belongs to the glycosyl hydrolase 2 family.

The catalysed reaction is Hydrolysis of terminal non-reducing beta-D-galactose residues in beta-D-galactosides.. The protein is Beta-galactosidase (lacZ) of Halalkalibacterium halodurans (strain ATCC BAA-125 / DSM 18197 / FERM 7344 / JCM 9153 / C-125) (Bacillus halodurans).